The sequence spans 255 residues: Proteasome subunit alpha (255 aa).

Residues 228–255 (LLASPAGTSGPTGEPGPAGTAATDGGDL) form a disordered region. Residues 232–255 (PAGTSGPTGEPGPAGTAATDGGDL) show a composition bias toward low complexity.

It belongs to the peptidase T1A family. The 20S proteasome core is composed of 14 alpha and 14 beta subunits that assemble into four stacked heptameric rings, resulting in a barrel-shaped structure. The two inner rings, each composed of seven catalytic beta subunits, are sandwiched by two outer rings, each composed of seven alpha subunits. The catalytic chamber with the active sites is on the inside of the barrel. Has a gated structure, the ends of the cylinder being occluded by the N-termini of the alpha-subunits. Is capped by the proteasome-associated ATPase, ARC.

The protein localises to the cytoplasm. It participates in protein degradation; proteasomal Pup-dependent pathway. Its activity is regulated as follows. The formation of the proteasomal ATPase ARC-20S proteasome complex, likely via the docking of the C-termini of ARC into the intersubunit pockets in the alpha-rings, may trigger opening of the gate for substrate entry. Interconversion between the open-gate and close-gate conformations leads to a dynamic regulation of the 20S proteasome proteolysis activity. Component of the proteasome core, a large protease complex with broad specificity involved in protein degradation. This chain is Proteasome subunit alpha, found in Sanguibacter keddieii (strain ATCC 51767 / DSM 10542 / NCFB 3025 / ST-74).